The following is a 545-amino-acid chain: CTP synthase (545 aa).

An amidoligase domain region spans residues 1-265 (MNGIKHIFIT…DKFVIKHLDL (265 aa)). S15 lines the CTP pocket. S15 serves as a coordination point for UTP. ATP-binding positions include 16-21 (SIGKGL) and D73. Residues D73 and E141 each contribute to the Mg(2+) site. Residues 148 to 150 (DIE), 188 to 193 (KTKPTQ), and K224 each bind CTP. UTP contacts are provided by residues 188–193 (KTKPTQ) and K224. Residues 290–534 (EIAIIGKYTG…VAAALARKEI (245 aa)) enclose the Glutamine amidotransferase type-1 domain. G349 lines the L-glutamine pocket. Residue C376 is the Nucleophile; for glutamine hydrolysis of the active site. L-glutamine-binding positions include 377–380 (LGMQ), E400, and R460. Active-site residues include H507 and E509.

The protein belongs to the CTP synthase family. Homotetramer.

The enzyme catalyses UTP + L-glutamine + ATP + H2O = CTP + L-glutamate + ADP + phosphate + 2 H(+). It carries out the reaction L-glutamine + H2O = L-glutamate + NH4(+). The catalysed reaction is UTP + NH4(+) + ATP = CTP + ADP + phosphate + 2 H(+). It participates in pyrimidine metabolism; CTP biosynthesis via de novo pathway; CTP from UDP: step 2/2. Allosterically activated by GTP, when glutamine is the substrate; GTP has no effect on the reaction when ammonia is the substrate. The allosteric effector GTP functions by stabilizing the protein conformation that binds the tetrahedral intermediate(s) formed during glutamine hydrolysis. Inhibited by the product CTP, via allosteric rather than competitive inhibition. Catalyzes the ATP-dependent amination of UTP to CTP with either L-glutamine or ammonia as the source of nitrogen. Regulates intracellular CTP levels through interactions with the four ribonucleotide triphosphates. This chain is CTP synthase, found in Tropheryma whipplei (strain TW08/27) (Whipple's bacillus).